Reading from the N-terminus, the 392-residue chain is Succinate--CoA ligase [ADP-forming] subunit beta (392 aa).

An ATP-grasp domain is found at 9 to 247 (KEILRVCGVP…LYEEDPKEIE (239 aa)). ATP-binding positions include Lys49, 56-58 (GRG), Glu102, Gln105, and Glu110. Mg(2+)-binding residues include Asn202 and Asp216. Substrate contacts are provided by residues Asn267 and 324-326 (GIM).

Belongs to the succinate/malate CoA ligase beta subunit family. In terms of assembly, heterotetramer of two alpha and two beta subunits. It depends on Mg(2+) as a cofactor.

It catalyses the reaction succinate + ATP + CoA = succinyl-CoA + ADP + phosphate. The catalysed reaction is GTP + succinate + CoA = succinyl-CoA + GDP + phosphate. The protein operates within carbohydrate metabolism; tricarboxylic acid cycle; succinate from succinyl-CoA (ligase route): step 1/1. In terms of biological role, succinyl-CoA synthetase functions in the citric acid cycle (TCA), coupling the hydrolysis of succinyl-CoA to the synthesis of either ATP or GTP and thus represents the only step of substrate-level phosphorylation in the TCA. The beta subunit provides nucleotide specificity of the enzyme and binds the substrate succinate, while the binding sites for coenzyme A and phosphate are found in the alpha subunit. The polypeptide is Succinate--CoA ligase [ADP-forming] subunit beta (Neorickettsia sennetsu (strain ATCC VR-367 / Miyayama) (Ehrlichia sennetsu)).